A 513-amino-acid polypeptide reads, in one-letter code: Light-independent protochlorophyllide reductase subunit B (513 aa).

D36 contributes to the [4Fe-4S] cluster binding site. D299 functions as the Proton donor in the catalytic mechanism. Residue 434-435 (GM) coordinates substrate.

It belongs to the ChlB/BchB/BchZ family. Protochlorophyllide reductase is composed of three subunits; ChlL, ChlN and ChlB. Forms a heterotetramer of two ChlB and two ChlN subunits. Requires [4Fe-4S] cluster as cofactor.

The protein resides in the plastid. It is found in the chloroplast. It catalyses the reaction chlorophyllide a + oxidized 2[4Fe-4S]-[ferredoxin] + 2 ADP + 2 phosphate = protochlorophyllide a + reduced 2[4Fe-4S]-[ferredoxin] + 2 ATP + 2 H2O. Its pathway is porphyrin-containing compound metabolism; chlorophyll biosynthesis (light-independent). Its function is as follows. Component of the dark-operative protochlorophyllide reductase (DPOR) that uses Mg-ATP and reduced ferredoxin to reduce ring D of protochlorophyllide (Pchlide) to form chlorophyllide a (Chlide). This reaction is light-independent. The NB-protein (ChlN-ChlB) is the catalytic component of the complex. In Anthoceros angustus (Hornwort), this protein is Light-independent protochlorophyllide reductase subunit B.